Here is a 373-residue protein sequence, read N- to C-terminus: MATLFLYSNTFSFFFITLVSLALLILRQPSRAASCTARPVIFNFGDSNSDTGGLVAGLGYPIGFPNGRLFFRRSTGRLSDGRLLIDFLCQSLNTSLLRPYLDSLGRTRFQNGANFAIAGSPTLPKNVPFSLNIQVKQFSHFKSRSLELASSSNSLKGMFISNNGFKNALYMIDIGQNDIARSFARGNSYSQTVKLIPQIITEIKSSIKRLYDEGGRRFWIHNTGPLGCLPQKLSMVKSKDLDQHGCLVSYNSAATLFNQGLDHMCEELRTELRDATIIYIDIYAIKYSLIANSNQYGFKSPLMACCGYGGTPYNYNVKITCGHKGSNVCEEGSRFISWDGIHYTETANAIVAMKVLSMHYSKPPTPFHFFCRR.

The signal sequence occupies residues 1–32 (MATLFLYSNTFSFFFITLVSLALLILRQPSRA). Ser-47 acts as the Nucleophile in catalysis. A glycan (N-linked (GlcNAc...) asparagine) is linked at Asn-93. Active-site residues include Asp-339 and His-342.

It belongs to the 'GDSL' lipolytic enzyme family.

Its subcellular location is the secreted. This chain is GDSL esterase/lipase LIP-4 (LIP4), found in Arabidopsis thaliana (Mouse-ear cress).